The sequence spans 944 residues: Proline and serine-rich protein 1 (944 aa).

M1 is subject to N-acetylmethionine. 4 disordered regions span residues 233–285 (PPPY…PVPT), 369–396 (PGPS…SEAF), 608–633 (KTEP…HGTL), and 912–944 (ESYP…SGWQ). Polar residues predominate over residues 248 to 274 (LSNPSKPIQNQTFSTPASQLFSPHGSN). Positions 275–285 (PSTPAATPVPT) are enriched in low complexity. Residues 932-944 (FSLQPSLSQSGWQ) are compositionally biased toward polar residues.

As to quaternary structure, interacts with TET2 and OGT; this interaction mediates TET2 O-GlcNAcylation and stability by promoting the interaction between OGT and TET2. Interacts with KDM6A. Interacts with TET1. Post-translationally, glycosylated. Interaction with OGT leads to GlcNAcylation.

Functionally, mediates OGT interaction with and O-GlcNAcylation of TET2 to control TET2 stabilization at enhancers and CpG islands (CGIs). The protein is Proline and serine-rich protein 1 of Homo sapiens (Human).